Here is a 500-residue protein sequence, read N- to C-terminus: Chromosomal replication initiator protein DnaA (500 aa).

Residues 1 to 81 form a domain I, interacts with DnaA modulators region; sequence MVNASGDPVI…LQALRTVTGE (81 aa). The interval 81–155 is domain II; sequence ENMFPAFKVV…QQKMNRDPET (75 aa). The interval 156–377 is domain III, AAA+ region; it reads HLNKNFTFDS…GALTRVTAVA (222 aa). ATP-binding residues include glycine 200, glycine 202, lysine 203, and threonine 204. The segment at 378-500 is domain IV, binds dsDNA; sequence SLSNQPVTRA…TVRLKQSNTN (123 aa).

The protein belongs to the DnaA family. Oligomerizes as a right-handed, spiral filament on DNA at oriC.

It localises to the cytoplasm. In terms of biological role, plays an essential role in the initiation and regulation of chromosomal replication. ATP-DnaA binds to the origin of replication (oriC) to initiate formation of the DNA replication initiation complex once per cell cycle. Binds the DnaA box (a 9 base pair repeat at the origin) and separates the double-stranded (ds)DNA. Forms a right-handed helical filament on oriC DNA; dsDNA binds to the exterior of the filament while single-stranded (ss)DNA is stabiized in the filament's interior. The ATP-DnaA-oriC complex binds and stabilizes one strand of the AT-rich DNA unwinding element (DUE), permitting loading of DNA polymerase. After initiation quickly degrades to an ADP-DnaA complex that is not apt for DNA replication. Binds acidic phospholipids. The sequence is that of Chromosomal replication initiator protein DnaA from Bifidobacterium longum subsp. infantis (strain ATCC 15697 / DSM 20088 / JCM 1222 / NCTC 11817 / S12).